The chain runs to 52 residues: Small, acid-soluble spore protein K (52 aa).

The interval Met-1–Glu-52 is disordered.

This sequence belongs to the SspK family.

It localises to the spore core. The chain is Small, acid-soluble spore protein K from Bacillus anthracis (strain A0248).